The chain runs to 235 residues: Methylosome subunit pICln (235 aa).

Residues 1 to 21 (MSFLKSFPPPGSAEGLRQQQP) are disordered. The residue at position 2 (Ser2) is an N-acetylserine. Ser100, Ser142, Ser191, Ser193, Ser196, and Ser208 each carry phosphoserine. The interval 133–157 (LHPDPEDEDSDDYDGEEYDVEAHEQ) is disordered. Acidic residues predominate over residues 137–151 (PEDEDSDDYDGEEYD). Positions 195–217 (SSQYNMAGVRTEDSTRDYEDGME) are disordered. Positions 204–213 (RTEDSTRDYE) are enriched in basic and acidic residues. Thr221 carries the post-translational modification Phosphothreonine.

This sequence belongs to the pICln (TC 1.A.47) family. In terms of assembly, component of the methylosome, a 20S complex containing at least PRMT5/SKB1, WDR77/MEP50 and CLNS1A/pICln. May mediate SNRPD1 and SNRPD3 methylation. Forms a 6S pICln-Sm complex composed of CLNS1A/pICln, SNRPD1, SNRPD2, SNRPE, SNRPF and SNRPG; ring-like structure where CLNS1A/pICln mimics additional Sm proteins and which is unable to assemble into the core snRNP. Interacts with LSM10 and LSM11.

Its subcellular location is the cytoplasm. It localises to the cytosol. The protein resides in the nucleus. It is found in the cytoskeleton. Its function is as follows. Involved in both the assembly of spliceosomal snRNPs and the methylation of Sm proteins. Chaperone that regulates the assembly of spliceosomal U1, U2, U4 and U5 small nuclear ribonucleoproteins (snRNPs), the building blocks of the spliceosome, and thereby plays an important role in the splicing of cellular pre-mRNAs. Most spliceosomal snRNPs contain a common set of Sm proteins SNRPB, SNRPD1, SNRPD2, SNRPD3, SNRPE, SNRPF and SNRPG that assemble in a heptameric protein ring on the Sm site of the small nuclear RNA to form the core snRNP (Sm core). In the cytosol, the Sm proteins SNRPD1, SNRPD2, SNRPE, SNRPF and SNRPG are trapped in an inactive 6S pICln-Sm complex by the chaperone CLNS1A that controls the assembly of the core snRNP. Dissociation by the SMN complex of CLNS1A from the trapped Sm proteins and their transfer to an SMN-Sm complex triggers the assembly of core snRNPs and their transport to the nucleus. The chain is Methylosome subunit pICln (CLNS1A) from Canis lupus familiaris (Dog).